Consider the following 313-residue polypeptide: MKLTDNVLRSFRVAKVFRENSDKINCFDFSPTGETVISSSDDDSIVLYDCQEGKPKRTLYSKKYGVDLIRYTHAANTVVYSSNKIDDTIRYLSLHDNKYIRYFPGHSKRVVALSMSPVDDTFISGSLDKTIRLWDLRSPNCQGLMHLQGKPVCSFDPEGLIFAAGVNSEMVKLYDLRSFDKGPFATFKMQYDRTCEWTALKFSNDGKLILMSTNGGFLRLVDAFKGAVMHTFGGYNNSKAVTLEATFTPDSQFIMIGSEDGKIHVWNCESGMKVAVLDGKHTGPITCLQFNPKFMTFTSACSNMAFWLPTIDD.

WD repeat units lie at residues 19–58, 105–144, 146–184, 192–231, 236–276, and 280–313; these read ENSD…PKRT, GHSK…CQGL, HLQG…KGPF, DRTC…VMHT, NNSK…KVAV, and KHTG…TIDD.

The protein belongs to the WD repeat SWD2 family. As to quaternary structure, component of the SET1/COMPASS complex. Component of the PNUTS-PP1 phosphatase complex.

Its subcellular location is the nucleus. It is found in the chromosome. The protein resides in the cytoplasm. Regulatory component of the SET1/COMPASS complex implicated in the tethering of this complex to transcriptional start sites of active genes. Facilitates histone H3 'Lys-4' methylation (H3K4me) via recruitment of the SETD1A or SETD1B to the 'Ser-5' phosphorylated C-terminal domain (CTD) of RNA polymerase II large subunit (POLR2A). Component of the PNUTS-PP1 protein phosphatase complex, a protein phosphatase 1 (PP1) complex that promotes RNA polymerase II transcription pause-release, allowing transcription elongation. The polypeptide is WD repeat-containing protein 82 (wdr82) (Xenopus tropicalis (Western clawed frog)).